The sequence spans 205 residues: Small ribosomal subunit protein uS4 (205 aa).

The disordered stretch occupies residues 18–46; that stretch reads NIWGRSKSPVNRREYGPGQHGQRRKGKLS. Residues 94–157 enclose the S4 RNA-binding domain; it reads RRLDAVVYRA…RQMTLVLEAQ (64 aa).

This sequence belongs to the universal ribosomal protein uS4 family. In terms of assembly, part of the 30S ribosomal subunit. Contacts protein S5. The interaction surface between S4 and S5 is involved in control of translational fidelity.

One of the primary rRNA binding proteins, it binds directly to 16S rRNA where it nucleates assembly of the body of the 30S subunit. In terms of biological role, with S5 and S12 plays an important role in translational accuracy. This chain is Small ribosomal subunit protein uS4, found in Xanthobacter autotrophicus (strain ATCC BAA-1158 / Py2).